We begin with the raw amino-acid sequence, 307 residues long: uncharacterized protein (307 aa).

This is an uncharacterized protein from Archaeoglobus fulgidus (strain ATCC 49558 / DSM 4304 / JCM 9628 / NBRC 100126 / VC-16).